The following is a 232-amino-acid chain: UPF0173 metal-dependent hydrolase Msil_0741 (232 aa).

Belongs to the UPF0173 family.

In Methylocella silvestris (strain DSM 15510 / CIP 108128 / LMG 27833 / NCIMB 13906 / BL2), this protein is UPF0173 metal-dependent hydrolase Msil_0741.